A 555-amino-acid chain; its full sequence is Vacuolar fusion protein MON1 homolog A (555 aa).

The span at 1-12 (MAADMQRKRSSE) shows a compositional bias: basic and acidic residues. The disordered stretch occupies residues 1–87 (MAADMQRKRS…RGPPPLPADM (87 aa)). A phosphoserine mark is found at serine 31 and serine 56. Threonine 61 is modified (phosphothreonine). A Phosphoserine modification is found at serine 91. Positions 114–147 (PGSSEDWLDPPGAVGRPATEPPREGTAEGDEEDA) are disordered.

It belongs to the MON1/SAND family. As to quaternary structure, interacts with CCZ1. Found in a complex with RMC1, CCZ1, MON1A and MON1B. The MON1A-CCZ1B complex interacts with RIMOC1. The MON1A-CCZ1B complex interacts with RAB7A and this interaction is enhanced in the presence of RIMOC1.

Its function is as follows. Plays an important role in membrane trafficking through the secretory apparatus. Not involved in endocytic trafficking to lysosomes. Acts in concert with CCZ1, as a guanine exchange factor (GEF) for RAB7, promotes the exchange of GDP to GTP, converting it from an inactive GDP-bound form into an active GTP-bound form. The chain is Vacuolar fusion protein MON1 homolog A (MON1A) from Macaca fascicularis (Crab-eating macaque).